We begin with the raw amino-acid sequence, 337 residues long: 4-hydroxy-2-oxovalerate aldolase (337 aa).

The 251-residue stretch at 6-256 folds into the Pyruvate carboxyltransferase domain; sequence IRIMDTTLRD…ETGIDLFQIM (251 aa). 14–15 contacts substrate; the sequence is RD. Aspartate 15 provides a ligand contact to Mn(2+). Histidine 18 (proton acceptor) is an active-site residue. Substrate-binding residues include serine 168 and histidine 195. Mn(2+) is bound by residues histidine 195 and histidine 197. Substrate is bound at residue tyrosine 286.

This sequence belongs to the 4-hydroxy-2-oxovalerate aldolase family.

The catalysed reaction is (S)-4-hydroxy-2-oxopentanoate = acetaldehyde + pyruvate. In Geobacillus genomosp. 3, this protein is 4-hydroxy-2-oxovalerate aldolase (nahM).